Here is a 403-residue protein sequence, read N- to C-terminus: Dynactin subunit 2-B (403 aa).

Positions 1-26 (MADPKYADLPGIARNEPDLYETSDLP) are disordered. Positions 99 to 132 (PQQKYQRLLHEVQELTQEVEKTQSTLKESATEEK) form a coiled coil. A disordered region spans residues 183–206 (AAKTRKDPEGKSSAKGPGPDNENL). The segment covering 184 to 194 (AKTRKDPEGKS) has biased composition (basic and acidic residues). A coiled-coil region spans residues 381-401 (KENLATVEDNFSSIDGRIKKL).

This sequence belongs to the dynactin subunit 2 family. Subunit of dynactin, a multiprotein complex part of a tripartite complex with dynein and a adapter, such as BICDL1, BICD2 or HOOK3. The dynactin complex is built around ACTR1A/ACTB filament and consists of an actin-related filament composed of a shoulder domain, a pointed end and a barbed end. Its length is defined by its flexible shoulder domain. The soulder is composed of 2 DCTN1 subunits, 4 DCTN2 and 2 DCTN3.

It localises to the cytoplasm. The protein localises to the cytoskeleton. It is found in the microtubule organizing center. Its subcellular location is the centrosome. The protein resides in the membrane. Part of the dynactin complex that activates the molecular motor dynein for ultra-processive transport along microtubules. In the dynactin soulder domain, binds the ACTR1A filament and acts as a molecular ruler to determine the length. Modulates cytoplasmic dynein binding to an organelle, and plays a role in prometaphase chromosome alignment and spindle organization during mitosis. Involved in anchoring microtubules to centrosomes. This Xenopus laevis (African clawed frog) protein is Dynactin subunit 2-B (dctn2-b).